The chain runs to 89 residues: Large ribosomal subunit protein bL28 (89 aa).

It belongs to the bacterial ribosomal protein bL28 family.

The polypeptide is Large ribosomal subunit protein bL28 (Chlamydia trachomatis serovar A (strain ATCC VR-571B / DSM 19440 / HAR-13)).